A 208-amino-acid polypeptide reads, in one-letter code: ATP-dependent Clp protease proteolytic subunit (208 aa).

The active-site Nucleophile is the Ser-105. His-130 is a catalytic residue.

This sequence belongs to the peptidase S14 family. As to quaternary structure, fourteen ClpP subunits assemble into 2 heptameric rings which stack back to back to give a disk-like structure with a central cavity, resembling the structure of eukaryotic proteasomes.

The protein localises to the cytoplasm. It catalyses the reaction Hydrolysis of proteins to small peptides in the presence of ATP and magnesium. alpha-casein is the usual test substrate. In the absence of ATP, only oligopeptides shorter than five residues are hydrolyzed (such as succinyl-Leu-Tyr-|-NHMec, and Leu-Tyr-Leu-|-Tyr-Trp, in which cleavage of the -Tyr-|-Leu- and -Tyr-|-Trp bonds also occurs).. In terms of biological role, cleaves peptides in various proteins in a process that requires ATP hydrolysis. Has a chymotrypsin-like activity. Plays a major role in the degradation of misfolded proteins. The protein is ATP-dependent Clp protease proteolytic subunit of Xanthomonas campestris pv. campestris (strain 8004).